The primary structure comprises 338 residues: UDP-3-O-acylglucosamine N-acyltransferase (338 aa).

His251 functions as the Proton acceptor in the catalytic mechanism.

This sequence belongs to the transferase hexapeptide repeat family. LpxD subfamily. As to quaternary structure, homotrimer.

It catalyses the reaction a UDP-3-O-[(3R)-3-hydroxyacyl]-alpha-D-glucosamine + a (3R)-hydroxyacyl-[ACP] = a UDP-2-N,3-O-bis[(3R)-3-hydroxyacyl]-alpha-D-glucosamine + holo-[ACP] + H(+). Its pathway is bacterial outer membrane biogenesis; LPS lipid A biosynthesis. Functionally, catalyzes the N-acylation of UDP-3-O-acylglucosamine using 3-hydroxyacyl-ACP as the acyl donor. Is involved in the biosynthesis of lipid A, a phosphorylated glycolipid that anchors the lipopolysaccharide to the outer membrane of the cell. In Psychrobacter cryohalolentis (strain ATCC BAA-1226 / DSM 17306 / VKM B-2378 / K5), this protein is UDP-3-O-acylglucosamine N-acyltransferase.